A 169-amino-acid polypeptide reads, in one-letter code: uncharacterized protein (169 aa).

A signal peptide spans 1–21; sequence MVPVARASLFTLACLLVSVCA.

In terms of tissue distribution, component of the acid-soluble and acid-insoluble organic matrix of calcified shell layers (at protein level).

It is found in the secreted. This is an uncharacterized protein from Haliotis asinina (Donkey's ear abalone).